The chain runs to 155 residues: 6,7-dimethyl-8-ribityllumazine synthase (155 aa).

5-amino-6-(D-ribitylamino)uracil contacts are provided by residues F23, 57 to 59 (AFE), and 81 to 83 (AVI). 86–87 (ST) contributes to the (2S)-2-hydroxy-3-oxobutyl phosphate binding site. The active-site Proton donor is the H89. F114 contacts 5-amino-6-(D-ribitylamino)uracil. Residue R128 participates in (2S)-2-hydroxy-3-oxobutyl phosphate binding.

It belongs to the DMRL synthase family.

It carries out the reaction (2S)-2-hydroxy-3-oxobutyl phosphate + 5-amino-6-(D-ribitylamino)uracil = 6,7-dimethyl-8-(1-D-ribityl)lumazine + phosphate + 2 H2O + H(+). Its pathway is cofactor biosynthesis; riboflavin biosynthesis; riboflavin from 2-hydroxy-3-oxobutyl phosphate and 5-amino-6-(D-ribitylamino)uracil: step 1/2. Functionally, catalyzes the formation of 6,7-dimethyl-8-ribityllumazine by condensation of 5-amino-6-(D-ribitylamino)uracil with 3,4-dihydroxy-2-butanone 4-phosphate. This is the penultimate step in the biosynthesis of riboflavin. This Dehalococcoides mccartyi (strain ATCC BAA-2266 / KCTC 15142 / 195) (Dehalococcoides ethenogenes (strain 195)) protein is 6,7-dimethyl-8-ribityllumazine synthase.